A 456-amino-acid polypeptide reads, in one-letter code: MSHSGLRSTSTSYRRTLGSSPVPSSYSSSSRLSTSRHFGSPSPGPSSRSSSSAFRVRSSTPVRVSLDRVDFSVAEAVNQEFLTTRSNEKAELQELNDRFASFIEKVRYLEQQNAVLVTEINQARSKEPTRASDLCQQELRELRKQLELLGKDRDHIQVERDNFAEDLAFLKQRLDEEVHKREDAENNLVLFRKDVDDATLSRLELERKIESLMDEIEFLKKLHEEELNDVQVSVQAQPVHMEIEAAKQPDLTSALRDIRSQYETIAAKNVQESEDWYKSKFADLSDAANRNSEALRQAKQDMNESRRQIQSLTCEVDGLKGTNEALLRQMKNMEEQFGMEAANYQDTIGGLEQEVQHMKEEMSRHLREYQDLLNVKMALDIEIATYRKLLEGEESRIAVPIHSLTSLSIKSPAAPEIDPSTETHTRKTVAIKTIETRDGEQVVTESRKEQSSEGEK.

Residues Met-1–Arg-14 are compositionally biased toward polar residues. The disordered stretch occupies residues Met-1–Arg-55. The interval Met-1 to Ala-90 is head. Low complexity predominate over residues Thr-16–Arg-55. The 310-residue stretch at Glu-88 to Ile-397 folds into the IF rod domain. The coil 1A stretch occupies residues Glu-91–Ala-123. The tract at residues Arg-124–Leu-134 is linker 1. Residues Cys-135–Val-230 form a coil 1B region. Residues Gln-231–Thr-252 form a linker 2 region. The tract at residues Ser-253–Ser-395 is coil 2. The segment at Arg-396–Lys-456 is tail. A disordered region spans residues Ser-411–Lys-456. Over residues Ile-434 to Lys-456 the composition is skewed to basic and acidic residues.

Belongs to the intermediate filament family. In terms of assembly, forms homodimers (in vitro). Homopolymerizes into a filamentous network (in vitro).

It localises to the cytoplasm. It is found in the cytoskeleton. The protein resides in the cell projection. Its subcellular location is the axon. The protein localises to the perikaryon. Class-III neuronal intermediate filament protein. My form an independent structural network without the involvement of other neurofilaments or may cooperate with other neuronal intermediate filament proteins to form a filamentous network. The chain is Peripherin (prph) from Xenopus laevis (African clawed frog).